The sequence spans 265 residues: Energy-coupling factor transporter transmembrane protein EcfT (265 aa).

Helical transmembrane passes span 32–52, 72–92, 115–135, 150–170, and 245–265; these read MVLL…VFII, LVII…GRVI, LIML…IALT, VPAH…PTLM, and LAAF…RFIW.

It belongs to the energy-coupling factor EcfT family. As to quaternary structure, forms a stable energy-coupling factor (ECF) transporter complex composed of 2 membrane-embedded substrate-binding proteins (S component), 2 ATP-binding proteins (A component) and 2 transmembrane proteins (T component). May be able to interact with more than 1 S component at a time.

The protein resides in the cell membrane. Transmembrane (T) component of an energy-coupling factor (ECF) ABC-transporter complex. Unlike classic ABC transporters this ECF transporter provides the energy necessary to transport a number of different substrates. This Thermosediminibacter oceani (strain ATCC BAA-1034 / DSM 16646 / JW/IW-1228P) protein is Energy-coupling factor transporter transmembrane protein EcfT.